The primary structure comprises 387 residues: MKILADENMPYVQELFGDLGTIETVNGRELTPEQVKDADVLLVRSVTQVNGSLLSLNNKLKFVGSATIGTDHIDTDYLASRDIPFSNAPGCNATAVGEFAFIAMLELANRFGGKLKDKTVGIVGAGNTGSAVAKCLQAYGVTVLLHDPVIQDSDPRDFISLDELIARCDVISLHVPIIKTGEHKTWYLFDETRLNSLKPGTWLLNCCRGEVIDNRALIKVKQQRPDIKLVLDVWEGEPNPMHELIPLVELATPHIAGYSLEGKARGTYMLYQKLMQVLGRDADKSMTTLLPSLWSVQLDIESIPNEKSLLKLARFIYDLRDDDELFRKTILDDSSKNDQVNCVNNNGFDLMRKNHQHRREFRALRLVNTGHSDVNWLTNLGFSGVGQ.

Positions 45 and 67 each coordinate substrate. Position 147 (Asp-147) interacts with NAD(+). Arg-208 is a catalytic residue. Asp-232 contacts NAD(+). Glu-237 is a catalytic residue. His-254 functions as the Proton donor in the catalytic mechanism. Gly-257 lines the NAD(+) pocket. Tyr-258 contributes to the substrate binding site.

The protein belongs to the D-isomer specific 2-hydroxyacid dehydrogenase family. PdxB subfamily. In terms of assembly, homodimer.

The protein resides in the cytoplasm. The catalysed reaction is 4-phospho-D-erythronate + NAD(+) = (R)-3-hydroxy-2-oxo-4-phosphooxybutanoate + NADH + H(+). The protein operates within cofactor biosynthesis; pyridoxine 5'-phosphate biosynthesis; pyridoxine 5'-phosphate from D-erythrose 4-phosphate: step 2/5. In terms of biological role, catalyzes the oxidation of erythronate-4-phosphate to 3-hydroxy-2-oxo-4-phosphonooxybutanoate. This Shewanella violacea (strain JCM 10179 / CIP 106290 / LMG 19151 / DSS12) protein is Erythronate-4-phosphate dehydrogenase.